Here is a 395-residue protein sequence, read N- to C-terminus: Acid ceramidase (395 aa).

The first 21 residues, Met-1 to Ala-21, serve as a signal peptide directing secretion. An intrachain disulfide couples Cys-31 to Cys-340. Catalysis depends on Cys-143, which acts as the Nucleophile. N-linked (GlcNAc...) asparagine glycans are attached at residues Asn-173, Asn-195, Asn-259, Asn-286, Asn-342, and Asn-348. A disulfide bond links Cys-388 and Cys-392.

The protein belongs to the acid ceramidase family. As to quaternary structure, heterodimer; disulfide-linked. The heterodimer is composed of the disulfide-linked alpha and beta chains produced by autocatalytic cleavage of the precursor. Isoform 2: May interact with NR5A1 in the nucleus; the direct interaction would negatively regulate NR5A1 transcriptional activity. In terms of processing, N-glycosylated. Post-translationally, proteolytically cleaved into two chains alpha and beta that remain associated via a disulfide bond. Cleavage gives rise to a conformation change that activates the enzyme. The same catalytic Cys residue mediates the autoproteolytic cleavage and subsequent hydrolysis of lipid substrates. The beta chain may undergo an additional C-terminal processing. As to expression, broadly expressed with higher expression in heart.

It localises to the lysosome. Its subcellular location is the secreted. The protein resides in the nucleus. The protein localises to the cytoplasm. It carries out the reaction an N-acylsphing-4-enine + H2O = sphing-4-enine + a fatty acid. It catalyses the reaction a beta-D-glucosyl-(1&lt;-&gt;1')-N-acylsphing-4-enine + H2O = beta-D-glucosyl-(1&lt;-&gt;1)-sphing-4-enine + a fatty acid. The enzyme catalyses a globoside Gb3Cer + H2O = a lysoGb3 + a fatty acid. The catalysed reaction is a globoside Gb3Cer (d18:1(4E)) + H2O = a lysoGb3(d18:1(4E)) + a fatty acid. It carries out the reaction N-dodecanoylsphing-4-enine + H2O = dodecanoate + sphing-4-enine. It catalyses the reaction N-tetradecanoylsphing-4-enine + H2O = tetradecanoate + sphing-4-enine. The enzyme catalyses N-hexadecanoylsphing-4-enine + H2O = sphing-4-enine + hexadecanoate. The catalysed reaction is N-octadecanoylsphing-4-enine + H2O = sphing-4-enine + octadecanoate. It carries out the reaction N-dodecanoyl-(4R)-hydroxysphinganine + H2O = (4R)-hydroxysphinganine + dodecanoate. It catalyses the reaction N-(dodecanoyl)-sphinganine + H2O = dodecanoate + sphinganine. The enzyme catalyses N-(acetyl)-sphing-4-enine + H2O = sphing-4-enine + acetate. The catalysed reaction is N-(hexanoyl)sphing-4-enine + H2O = hexanoate + sphing-4-enine. It carries out the reaction N-octanoylsphing-4-enine + H2O = octanoate + sphing-4-enine. It catalyses the reaction N-(9Z-octadecenoyl)-sphing-4-enine + H2O = sphing-4-enine + (9Z)-octadecenoate. The enzyme catalyses N-dodecanoylethanolamine + H2O = dodecanoate + ethanolamine. Its pathway is lipid metabolism; sphingolipid metabolism. With respect to regulation, activated by Ca(2+), Mg(2+) and Na(+) cations. Inhibited by Zn(2+). Phosphatidylserine and phosphatidic acid stimulate while cardiolipin, phosphatidylcholine, lysophosphatidylcholine, phosphatidylethanolamine, phosphatidylinositol and sphingomyelin inhibit the reverse ceramide synthase activity. Phosphatidic acid, phosphatidylinositol and C16-ceramide inhibit the ceramidase/hydrolase activity. Lysosomal ceramidase that hydrolyzes sphingolipid ceramides into sphingosine and free fatty acids at acidic pH. Ceramides, sphingosine, and its phosphorylated form sphingosine-1-phosphate are bioactive lipids that mediate cellular signaling pathways regulating several biological processes including cell proliferation, apoptosis and differentiation. Has a higher catalytic efficiency towards C12-ceramides versus other ceramides. Also catalyzes the reverse reaction allowing the synthesis of ceramides from fatty acids and sphingosine. For the reverse synthetic reaction, the natural sphingosine D-erythro isomer is more efficiently utilized as a substrate compared to D-erythro-dihydrosphingosine and D-erythro-phytosphingosine, while the fatty acids with chain lengths of 12 or 14 carbons are the most efficiently used. Also has an N-acylethanolamine hydrolase activity. By regulating the levels of ceramides, sphingosine and sphingosine-1-phosphate in the epidermis, mediates the calcium-induced differentiation of epidermal keratinocytes. Also indirectly regulates tumor necrosis factor/TNF-induced apoptosis. By regulating the intracellular balance between ceramides and sphingosine, in adrenocortical cells, probably also acts as a regulator of steroidogenesis. Its function is as follows. May directly regulate steroidogenesis by binding the nuclear receptor NR5A1 and negatively regulating its transcriptional activity. In Homo sapiens (Human), this protein is Acid ceramidase.